The chain runs to 488 residues: Pup--protein ligase (488 aa).

Residue Glu34 participates in Mg(2+) binding. Arg77 is an ATP binding site. Mg(2+) is bound at residue Tyr79. Asp81 serves as the catalytic Proton acceptor. Glu87 provides a ligand contact to Mg(2+). Residues Thr90 and Trp453 each coordinate ATP.

It belongs to the Pup ligase/Pup deamidase family. Pup-conjugating enzyme subfamily.

The catalysed reaction is ATP + [prokaryotic ubiquitin-like protein]-L-glutamate + [protein]-L-lysine = ADP + phosphate + N(6)-([prokaryotic ubiquitin-like protein]-gamma-L-glutamyl)-[protein]-L-lysine.. Its pathway is protein degradation; proteasomal Pup-dependent pathway. The protein operates within protein modification; protein pupylation. In terms of biological role, catalyzes the covalent attachment of the prokaryotic ubiquitin-like protein modifier Pup to the proteasomal substrate proteins, thereby targeting them for proteasomal degradation. This tagging system is termed pupylation. The ligation reaction involves the side-chain carboxylate of the C-terminal glutamate of Pup and the side-chain amino group of a substrate lysine. This chain is Pup--protein ligase, found in Bifidobacterium dentium (strain ATCC 27534 / DSM 20436 / JCM 1195 / Bd1).